The chain runs to 239 residues: Transmembrane emp24 domain-containing protein 6 (239 aa).

A signal peptide spans 1 to 21; that stretch reads MFPLLLVAELVVLSLVTSVKS. Residues 22 to 200 lie on the Lumenal side of the membrane; sequence QETDPLHGSK…FFLLQSNYTY (179 aa). Positions 53–138 constitute a GOLD domain; sequence IECFWQFADQ…SIQVYLNFGV (86 aa). Asparagine 156 and asparagine 197 each carry an N-linked (GlcNAc...) asparagine glycan. Residues 201–223 traverse the membrane as a helical segment; that stretch reads VNWWSTAQSLAIVLSGALQLYFL. At 224–239 the chain is on the cytoplasmic side; that stretch reads KRLFTASTTDTKKPRC.

The protein belongs to the EMP24/GP25L family.

The protein resides in the endoplasmic reticulum membrane. The chain is Transmembrane emp24 domain-containing protein 6 (Tmed6) from Mus musculus (Mouse).